Reading from the N-terminus, the 284-residue chain is Tryptophan synthase alpha chain (284 aa).

Active-site proton acceptor residues include glutamate 55 and aspartate 66.

The protein belongs to the TrpA family. As to quaternary structure, tetramer of two alpha and two beta chains.

The enzyme catalyses (1S,2R)-1-C-(indol-3-yl)glycerol 3-phosphate + L-serine = D-glyceraldehyde 3-phosphate + L-tryptophan + H2O. It participates in amino-acid biosynthesis; L-tryptophan biosynthesis; L-tryptophan from chorismate: step 5/5. Functionally, the alpha subunit is responsible for the aldol cleavage of indoleglycerol phosphate to indole and glyceraldehyde 3-phosphate. This is Tryptophan synthase alpha chain from Methanococcus voltae.